The sequence spans 610 residues: ESX-5 secretion system protein EccA5 (610 aa).

357-364 contributes to the ATP binding site; it reads GPPGTGKT.

The protein belongs to the CbxX/CfxQ family. In terms of assembly, part of the ESX-5 / type VII secretion system (T7SS), which is composed of cytosolic and membrane components.

It localises to the cytoplasm. Its function is as follows. Part of the ESX-5 specialized secretion system, which is responsible for the secretion of EsxN and a number of PE_PGRS and PPE proteins. EccA5 exhibits ATPase activity and may provide energy for the export of ESX-5 substrates. The chain is ESX-5 secretion system protein EccA5 from Mycobacterium marinum (strain ATCC BAA-535 / M).